The chain runs to 585 residues: Arginine--tRNA ligase (585 aa).

Residues 131–141 (ANPTGPMHVGH) carry the 'HIGH' region motif.

This sequence belongs to the class-I aminoacyl-tRNA synthetase family. As to quaternary structure, monomer.

The protein localises to the cytoplasm. It catalyses the reaction tRNA(Arg) + L-arginine + ATP = L-arginyl-tRNA(Arg) + AMP + diphosphate. This is Arginine--tRNA ligase from Sinorhizobium medicae (strain WSM419) (Ensifer medicae).